Here is a 245-residue protein sequence, read N- to C-terminus: Probable phosphatase YcdX (245 aa).

9 residues coordinate Zn(2+): His7, His9, His15, His40, Glu73, His101, His131, Asp192, and His194.

It belongs to the PHP family. Homotrimer. The cofactor is Zn(2+).

The polypeptide is Probable phosphatase YcdX (Shigella flexneri serotype 5b (strain 8401)).